A 352-amino-acid polypeptide reads, in one-letter code: Maleylacetate reductase (352 aa).

This sequence belongs to the iron-containing alcohol dehydrogenase family.

The catalysed reaction is 3-oxoadipate + NAD(+) = maleylacetate + NADH + H(+). The enzyme catalyses 3-oxoadipate + NADP(+) = maleylacetate + NADPH + H(+). It functions in the pathway aromatic compound metabolism; 3-chlorocatechol degradation. This is Maleylacetate reductase (tcbF) from Pseudomonas sp. (strain P51).